Consider the following 104-residue polypeptide: Large ribosomal subunit protein uL24 (104 aa).

Belongs to the universal ribosomal protein uL24 family. In terms of assembly, part of the 50S ribosomal subunit.

In terms of biological role, one of two assembly initiator proteins, it binds directly to the 5'-end of the 23S rRNA, where it nucleates assembly of the 50S subunit. Functionally, one of the proteins that surrounds the polypeptide exit tunnel on the outside of the subunit. The sequence is that of Large ribosomal subunit protein uL24 from Baumannia cicadellinicola subsp. Homalodisca coagulata.